We begin with the raw amino-acid sequence, 217 residues long: Octanoyltransferase (217 aa).

The BPL/LPL catalytic domain maps to 32–207 (NDSPDELWIV…TLSQLLGYQH (176 aa)). Residues 71–78 (RGGQVTYH), 138–140 (SLG), and 151–153 (GLA) contribute to the substrate site. Catalysis depends on Cys169, which acts as the Acyl-thioester intermediate.

This sequence belongs to the LipB family.

The protein localises to the cytoplasm. The enzyme catalyses octanoyl-[ACP] + L-lysyl-[protein] = N(6)-octanoyl-L-lysyl-[protein] + holo-[ACP] + H(+). The protein operates within protein modification; protein lipoylation via endogenous pathway; protein N(6)-(lipoyl)lysine from octanoyl-[acyl-carrier-protein]: step 1/2. In terms of biological role, catalyzes the transfer of endogenously produced octanoic acid from octanoyl-acyl-carrier-protein onto the lipoyl domains of lipoate-dependent enzymes. Lipoyl-ACP can also act as a substrate although octanoyl-ACP is likely to be the physiological substrate. This is Octanoyltransferase from Shewanella oneidensis (strain ATCC 700550 / JCM 31522 / CIP 106686 / LMG 19005 / NCIMB 14063 / MR-1).